Consider the following 1070-residue polypeptide: Inactive tyrosine-protein kinase 7 (1070 aa).

Positions Met-1–Thr-30 are cleaved as a signal peptide. Ig-like C2-type domains follow at residues Ala-31–Asn-120, Pro-128–Ser-218, Ala-225–Leu-317, Pro-309–Thr-407, Pro-412–Gln-497, Lys-503–Leu-586, and Gly-578–Tyr-680. The Extracellular segment spans residues Ala-31–Thr-704. The cysteines at positions 53 and 101 are disulfide-linked. N-linked (GlcNAc...) asparagine glycosylation is found at Asn-116, Asn-175, Asn-184, Asn-214, Asn-268, and Asn-283. The cysteines at positions 150 and 200 are disulfide-linked. Disulfide bonds link Cys-246–Cys-301 and Cys-343–Cys-391. N-linked (GlcNAc...) asparagine glycosylation is found at Asn-405, Asn-463, Asn-567, and Asn-646. Disulfide bonds link Cys-433/Cys-481, Cys-524/Cys-570, and Cys-613/Cys-664. A helical membrane pass occupies residues Ile-705–Tyr-725. Over Cys-726–Pro-1070 the chain is Cytoplasmic. 2 disordered regions span residues Gln-736–Pro-759 and Gly-773–Arg-793. Residues Ser-794–Pro-1070 form an interaction with CTNNB1 region. Residues Leu-796–Val-1066 enclose the Protein kinase; inactive domain. Ser-1064 carries the phosphoserine modification.

Belongs to the protein kinase superfamily. Tyr protein kinase family. Insulin receptor subfamily. Interacts with CTNNB1. MMP14 cleaves PTK7 between Pro-621 and Leu-622 generating an N-terminal soluble (70 kDa) fragment and a membrane C-terminal (50 kDa) fragment. Proteolysis by MMP14 regulates PTK7 function in non-canonical Wnt signaling pathway. Highly expressed in lung, liver, pancreas, kidney, placenta and melanocytes. Weakly expressed in thyroid gland, ovary, brain, heart and skeletal muscle. Also expressed in erythroleukemia cells. But not expressed in colon.

It localises to the membrane. The protein localises to the cell junction. In terms of biological role, inactive tyrosine kinase involved in Wnt signaling pathway. Component of both the non-canonical (also known as the Wnt/planar cell polarity signaling) and the canonical Wnt signaling pathway. Functions in cell adhesion, cell migration, cell polarity, proliferation, actin cytoskeleton reorganization and apoptosis. Has a role in embryogenesis, epithelial tissue organization and angiogenesis. This is Inactive tyrosine-protein kinase 7 (PTK7) from Homo sapiens (Human).